We begin with the raw amino-acid sequence, 243 residues long: 1-(5-phosphoribosyl)-5-[(5-phosphoribosylamino)methylideneamino] imidazole-4-carboxamide isomerase (243 aa).

Asp-8 acts as the Proton acceptor in catalysis. The active-site Proton donor is Asp-129.

The protein belongs to the HisA/HisF family.

The protein localises to the cytoplasm. The enzyme catalyses 1-(5-phospho-beta-D-ribosyl)-5-[(5-phospho-beta-D-ribosylamino)methylideneamino]imidazole-4-carboxamide = 5-[(5-phospho-1-deoxy-D-ribulos-1-ylimino)methylamino]-1-(5-phospho-beta-D-ribosyl)imidazole-4-carboxamide. It participates in amino-acid biosynthesis; L-histidine biosynthesis; L-histidine from 5-phospho-alpha-D-ribose 1-diphosphate: step 4/9. The polypeptide is 1-(5-phosphoribosyl)-5-[(5-phosphoribosylamino)methylideneamino] imidazole-4-carboxamide isomerase (Azorhizobium caulinodans (strain ATCC 43989 / DSM 5975 / JCM 20966 / LMG 6465 / NBRC 14845 / NCIMB 13405 / ORS 571)).